The primary structure comprises 483 residues: Jacalin-related lectin 13 (483 aa).

The interval 1–20 (MTQKLESVGSERKSSEYMWD) is disordered. 3 consecutive Jacalin-type lectin domains span residues 2–147 (TQKL…YVTW), 150–295 (PARM…YFTT), and 307–461 (FREK…YFFP).

This sequence belongs to the jacalin lectin family.

This Arabidopsis thaliana (Mouse-ear cress) protein is Jacalin-related lectin 13 (JAL13).